The primary structure comprises 461 residues: Fumarate hydratase class II (461 aa).

Substrate is bound by residues serine 97 to threonine 99, histidine 127 to aspartate 130, serine 137 to asparagine 139, and threonine 185. Histidine 186 acts as the Proton donor/acceptor in catalysis. Residue serine 316 is part of the active site. Substrate is bound by residues serine 317 and lysine 322–asparagine 324.

This sequence belongs to the class-II fumarase/aspartase family. Fumarase subfamily. As to quaternary structure, homotetramer.

Its subcellular location is the cytoplasm. The catalysed reaction is (S)-malate = fumarate + H2O. Its pathway is carbohydrate metabolism; tricarboxylic acid cycle; (S)-malate from fumarate: step 1/1. Functionally, involved in the TCA cycle. Catalyzes the stereospecific interconversion of fumarate to L-malate. The sequence is that of Fumarate hydratase class II from Staphylococcus aureus (strain MSSA476).